Here is a 264-residue protein sequence, read N- to C-terminus: S-adenosylmethionine decarboxylase proenzyme (264 aa).

Ser112 (schiff-base intermediate with substrate; via pyruvic acid) is an active-site residue. Ser112 is modified (pyruvic acid (Ser); by autocatalysis). His117 serves as the catalytic Proton acceptor; for processing activity. Catalysis depends on Cys140, which acts as the Proton donor; for catalytic activity.

Belongs to the prokaryotic AdoMetDC family. Type 2 subfamily. Heterooctamer of four alpha and four beta chains arranged as a tetramer of alpha/beta heterodimers. Pyruvate is required as a cofactor. Post-translationally, is synthesized initially as an inactive proenzyme. Formation of the active enzyme involves a self-maturation process in which the active site pyruvoyl group is generated from an internal serine residue via an autocatalytic post-translational modification. Two non-identical subunits are generated from the proenzyme in this reaction, and the pyruvate is formed at the N-terminus of the alpha chain, which is derived from the carboxyl end of the proenzyme. The post-translation cleavage follows an unusual pathway, termed non-hydrolytic serinolysis, in which the side chain hydroxyl group of the serine supplies its oxygen atom to form the C-terminus of the beta chain, while the remainder of the serine residue undergoes an oxidative deamination to produce ammonia and the pyruvoyl group blocking the N-terminus of the alpha chain.

It carries out the reaction S-adenosyl-L-methionine + H(+) = S-adenosyl 3-(methylsulfanyl)propylamine + CO2. The protein operates within amine and polyamine biosynthesis; S-adenosylmethioninamine biosynthesis; S-adenosylmethioninamine from S-adenosyl-L-methionine: step 1/1. Catalyzes the decarboxylation of S-adenosylmethionine to S-adenosylmethioninamine (dcAdoMet), the propylamine donor required for the synthesis of the polyamines spermine and spermidine from the diamine putrescine. The protein is S-adenosylmethionine decarboxylase proenzyme of Salmonella gallinarum (strain 287/91 / NCTC 13346).